The chain runs to 100 residues: Putative antiporter subunit mnhF2 (100 aa).

A run of 3 helical transmembrane segments spans residues 5–25 (ITHIMIISSLIIFGIALIICL), 38–60 (VVTFDTTSAVVMSIVGVLSVLMG), and 70–92 (LIAIISFVSSVSISRFIGGGHVF).

It belongs to the CPA3 antiporters (TC 2.A.63) subunit F family. May form a heterooligomeric complex that consists of seven subunits: mnhA2, mnhB2, mnhC2, mnhD2, mnhE2, mnhF2 and mnhG2.

The protein resides in the cell membrane. The protein is Putative antiporter subunit mnhF2 (mnhF2) of Staphylococcus aureus (strain USA300).